A 342-amino-acid chain; its full sequence is Dihydroorotase (342 aa).

Zn(2+)-binding residues include H13 and H15. Substrate-binding positions include 15–17 (HLR) and N41. Zn(2+)-binding residues include K98, H135, and H173. At K98 the chain carries N6-carboxylysine. H135 contacts substrate. L218 provides a ligand contact to substrate. Zn(2+) is bound at residue D246. The active site involves D246. Residues H250 and A262 each contribute to the substrate site.

It belongs to the metallo-dependent hydrolases superfamily. DHOase family. Class II DHOase subfamily. In terms of assembly, homodimer. Zn(2+) is required as a cofactor.

It catalyses the reaction (S)-dihydroorotate + H2O = N-carbamoyl-L-aspartate + H(+). It functions in the pathway pyrimidine metabolism; UMP biosynthesis via de novo pathway; (S)-dihydroorotate from bicarbonate: step 3/3. Functionally, catalyzes the reversible cyclization of carbamoyl aspartate to dihydroorotate. The sequence is that of Dihydroorotase from Vibrio vulnificus (strain CMCP6).